The following is a 59-amino-acid chain: Large ribosomal subunit protein bL32 (59 aa).

Over residues Met1–Met15 the composition is skewed to basic residues. The interval Met1 to Ala26 is disordered.

It belongs to the bacterial ribosomal protein bL32 family.

The protein is Large ribosomal subunit protein bL32 of Cyanothece sp. (strain PCC 7425 / ATCC 29141).